Consider the following 524-residue polypeptide: M phase phosphoprotein 10 (524 aa).

A Nuclear localization signal 1 motif is present at residues 85–92; it reads VKRFAKNP. 2 disordered regions span residues 100-243 and 259-283; these read KLAL…KLGK and KLKDLSEDEEAEIENKGNEKLSTHE. The span at 109-168 shows a compositional bias: acidic residues; sequence DDIDEMDMDGFDSDDVDDEDKEIESNDSEGEDEEEEEEDEEEEEEEEEEEEEEKDGDNEG. The stretch at 131–165 forms a coiled coil; the sequence is IESNDSEGEDEEEEEEDEEEEEEEEEEEEEEKDGD. The span at 169-180 shows a compositional bias: basic and acidic residues; sequence IEDKFFKIKELE. The segment covering 181-191 has biased composition (acidic residues); that stretch reads EFLEEGEAEEY. Positions 196 to 207 are enriched in basic residues; the sequence is KNKKGVAQRKKQ. The segment covering 210–238 has biased composition (acidic residues); the sequence is SDDEDEEDDDDEEEDVEFDAFAGGDDEET. Residues 257–302 adopt a coiled-coil conformation; the sequence is KMKLKDLSEDEEAEIENKGNEKLSTHERARLKLQSKIEQMEKANLD. Residues 271–283 show a composition bias toward basic and acidic residues; that stretch reads IENKGNEKLSTHE. The Nuclear localization signal 2 signature appears at 373-380; the sequence is GKREAKEL. The tract at residues 479–524 is disordered; sequence KGDIKDESELTQEDRKRRRANKKRKFKAESANEPPKKALDTSTKNP. Positions 480–493 are enriched in basic and acidic residues; it reads GDIKDESELTQEDR. Residues 494-504 show a composition bias toward basic residues; sequence KRRRANKKRKF. The segment covering 505–517 has biased composition (basic and acidic residues); sequence KAESANEPPKKAL.

The protein belongs to the MPP10 family. Component of the ribosomal small subunit (SSU) processome. Interacts with THAL in the nucleus.

The protein resides in the nucleus. It localises to the nucleolus. Its function is as follows. Involved in nucleolar processing of pre-18S ribosomal RNA. This is M phase phosphoprotein 10 from Arabidopsis thaliana (Mouse-ear cress).